Consider the following 339-residue polypeptide: RNA 3'-terminal phosphate cyclase (339 aa).

ATP-binding positions include glutamine 101 and 283-286 (HMSD). Histidine 307 (tele-AMP-histidine intermediate) is an active-site residue.

This sequence belongs to the RNA 3'-terminal cyclase family. Type 1 subfamily.

It is found in the cytoplasm. It carries out the reaction a 3'-end 3'-phospho-ribonucleotide-RNA + ATP = a 3'-end 2',3'-cyclophospho-ribonucleotide-RNA + AMP + diphosphate. Catalyzes the conversion of 3'-phosphate to a 2',3'-cyclic phosphodiester at the end of RNA. The mechanism of action of the enzyme occurs in 3 steps: (A) adenylation of the enzyme by ATP; (B) transfer of adenylate to an RNA-N3'P to produce RNA-N3'PP5'A; (C) and attack of the adjacent 2'-hydroxyl on the 3'-phosphorus in the diester linkage to produce the cyclic end product. The biological role of this enzyme is unknown but it is likely to function in some aspects of cellular RNA processing. The sequence is that of RNA 3'-terminal phosphate cyclase from Sulfurisphaera tokodaii (strain DSM 16993 / JCM 10545 / NBRC 100140 / 7) (Sulfolobus tokodaii).